The sequence spans 340 residues: tRNA N6-adenosine threonylcarbamoyltransferase (340 aa).

Positions 115 and 119 each coordinate Fe cation. Residues 137 to 141, Asp170, Gly183, Asp187, and Asn276 contribute to the substrate site; that span reads IVSGG. Fe cation is bound at residue Asp304.

Belongs to the KAE1 / TsaD family. Requires Fe(2+) as cofactor.

The protein localises to the cytoplasm. It carries out the reaction L-threonylcarbamoyladenylate + adenosine(37) in tRNA = N(6)-L-threonylcarbamoyladenosine(37) in tRNA + AMP + H(+). Functionally, required for the formation of a threonylcarbamoyl group on adenosine at position 37 (t(6)A37) in tRNAs that read codons beginning with adenine. Is involved in the transfer of the threonylcarbamoyl moiety of threonylcarbamoyl-AMP (TC-AMP) to the N6 group of A37, together with TsaE and TsaB. TsaD likely plays a direct catalytic role in this reaction. The chain is tRNA N6-adenosine threonylcarbamoyltransferase from Staphylococcus epidermidis (strain ATCC 35984 / DSM 28319 / BCRC 17069 / CCUG 31568 / BM 3577 / RP62A).